Here is a 216-residue protein sequence, read N- to C-terminus: Holliday junction branch migration complex subunit RuvA (216 aa).

The segment at 1–64 is domain I; it reads MISFIKGVLI…EDAQQLYGFK (64 aa). The segment at 65–143 is domain II; that stretch reads SKVDKKVFQE…KMANEIYAQT (79 aa). The interval 144–163 is flexible linker; the sequence is SGTTTTSQDSQAQQAPTSVV. Residues 164–216 form a domain III region; sequence LANSIFNESVDALLALGYKQKDAEKMARSAMGDATTAAEVIRKALQGSIKSKR.

The protein belongs to the RuvA family. In terms of assembly, homotetramer. Forms an RuvA(8)-RuvB(12)-Holliday junction (HJ) complex. HJ DNA is sandwiched between 2 RuvA tetramers; dsDNA enters through RuvA and exits via RuvB. An RuvB hexamer assembles on each DNA strand where it exits the tetramer. Each RuvB hexamer is contacted by two RuvA subunits (via domain III) on 2 adjacent RuvB subunits; this complex drives branch migration. In the full resolvosome a probable DNA-RuvA(4)-RuvB(12)-RuvC(2) complex forms which resolves the HJ.

The protein localises to the cytoplasm. Its function is as follows. The RuvA-RuvB-RuvC complex processes Holliday junction (HJ) DNA during genetic recombination and DNA repair, while the RuvA-RuvB complex plays an important role in the rescue of blocked DNA replication forks via replication fork reversal (RFR). RuvA specifically binds to HJ cruciform DNA, conferring on it an open structure. The RuvB hexamer acts as an ATP-dependent pump, pulling dsDNA into and through the RuvAB complex. HJ branch migration allows RuvC to scan DNA until it finds its consensus sequence, where it cleaves and resolves the cruciform DNA. The sequence is that of Holliday junction branch migration complex subunit RuvA from Francisella tularensis subsp. tularensis (strain WY96-3418).